The sequence spans 403 residues: Eukaryotic initiation factor 4A (403 aa).

A disordered region spans residues 1–20 (MDDRNEIPQDGPASMEPEGV). A Q motif motif is present at residues 30-58 (DNFDDMNLREELLRGIYGYGFEKPSAIQQ). Positions 61–231 (IIPCVRGRDV…RCFMRDPVSI (171 aa)) constitute a Helicase ATP-binding domain. 74 to 81 (AQSGTGKT) is a binding site for ATP. Residues 179 to 182 (DEAD) carry the DEAD box motif. The region spanning 242 to 403 (GIKQFYVNVK…EMPANIADLI (162 aa)) is the Helicase C-terminal domain.

Belongs to the DEAD box helicase family. eIF4A subfamily. EIF4F is a multi-subunit complex, the composition of which varies with external and internal environmental conditions. It is composed of at least eIF4A, eIF4E1 and eIF4G1. Interacts with tud and vas. Interacts (via multiple contacts) with bam; the interaction is direct.

It is found in the cytoplasm. It localises to the cytoplasmic ribonucleoprotein granule. The enzyme catalyses ATP + H2O = ADP + phosphate + H(+). ATP-dependent RNA helicase which is a subunit of the eIF4F complex involved in cap recognition and is required for mRNA binding to ribosome. In the current model of translation initiation, eIF4A unwinds RNA secondary structures in the 5'-UTR of mRNAs which is necessary to allow efficient binding of the small ribosomal subunit, and subsequent scanning for the initiator codon. As a result, promotes cell proliferation and growth. Binds and antagonises the bam-bgcn complex; probably prevents bam mediated translational repression of shg/E-cadherin. Involved in germ cell formation. Involved in germline stem cell maintenance and proliferation; prevents differentiation. This chain is Eukaryotic initiation factor 4A, found in Drosophila melanogaster (Fruit fly).